A 388-amino-acid chain; its full sequence is Probable proton-coupled zinc antiporter SLC30A3 (388 aa).

The disordered stretch occupies residues 1 to 46 (MEPSPAAGGLETTRLVSPRDRGGAGGSLRLKSLFTEPSEPLPEESK). At 1–75 (MEPSPAAGGL…TPERLHARRQ (75 aa)) the chain is on the cytoplasmic side. A helical membrane pass occupies residues 76-96 (LYAACAVCFVFMAGEVVGGYL). Residues 97-105 (AHSLAIMTD) lie on the Lumenal side of the membrane. A helical transmembrane segment spans residues 106-126 (AAHLLADVGSMMGSLFSLWLS). Zn(2+) contacts are provided by H108 and D112. The Cytoplasmic portion of the chain corresponds to 127-145 (TRPATRTMTFGWHRSETLG). A helical membrane pass occupies residues 146–166 (ALASVVSLWMVTGILLYLAFV). Residues 167 to 177 (RLLHSDYHIEG) are Lumenal-facing. The chain crosses the membrane as a helical span at residues 178 to 198 (GAMLLTASIAVCANLLMAFVL). Over 199 to 235 (HQAGPPHSHGSRGAEYAPLEEGPEEPLPLGNTSVRAA) the chain is Cytoplasmic. Residues 236 to 256 (FVHVLGDLLQSFGVLAASILI) traverse the membrane as a helical segment. The Zn(2+) site is built by H238 and D242. At 257–264 (YFKPQYKA) the chain is on the lumenal side. A helical transmembrane segment spans residues 265-285 (ADPISTFLFSICALGSTAPTL). Residues 286–388 (RDVLRILMEG…CLRCQEPPQA (103 aa)) lie on the Cytoplasmic side of the membrane. Y357 participates in a covalent cross-link: Dityrosine (Tyr-Tyr) (interchain with Y-372). Y372 participates in a covalent cross-link: Dityrosine (Tyr-Tyr) (interchain with Y-357).

It belongs to the cation diffusion facilitator (CDF) transporter (TC 2.A.4) family. SLC30A subfamily. As to quaternary structure, homodimer; dityrosine-linked. Homodimerization seems specific of the human protein and enhances the zinc transport efficiency. Interacts with TMEM163. Homodimerization through dityrosine bonds is stimulated by oxidative stress.

It is found in the cytoplasmic vesicle. The protein localises to the secretory vesicle. Its subcellular location is the synaptic vesicle membrane. The protein resides in the synapse. It localises to the synaptosome. It is found in the late endosome membrane. The protein localises to the lysosome membrane. The catalysed reaction is Zn(2+)(in) + 2 H(+)(out) = Zn(2+)(out) + 2 H(+)(in). In terms of biological role, probable proton-coupled zinc ion antiporter mediating the import of zinc from cytoplasm into synaptic vesicles and participating to cellular zinc ion homeostasis in the brain. This Homo sapiens (Human) protein is Probable proton-coupled zinc antiporter SLC30A3.